The primary structure comprises 150 residues: MADPEVAAAGIVKKRTFKKFSFRGVDLDALLDMSTDDLVKLFPSRIRRRFSRGLTRKPMALIKKLRKAKIEAPAGEKPAAVRTHLRNMIIVPEMIGSVIGVYNGKTFNQVEIKPEMIGHYLAEFSISYKPVKHGRPGVGATNSSRFIPLK.

Belongs to the universal ribosomal protein uS19 family.

It is found in the cytoplasm. This Arabidopsis thaliana (Mouse-ear cress) protein is Small ribosomal subunit protein uS19y (RPS15C).